Reading from the N-terminus, the 108-residue chain is uncharacterized protein (108 aa).

This is an uncharacterized protein from Pasteurella multocida (strain Pm70).